We begin with the raw amino-acid sequence, 1278 residues long: Cytoplasmic FMR1-interacting protein 2 (1278 aa).

At K1062 the chain carries N6-acetyllysine.

This sequence belongs to the CYFIP family. As to quaternary structure, component of the WAVE1 complex composed of ABI2, CYFIP2, BRK1, NCKAP1 and WASF1/WAVE1. Interacts with FMR1, FXR1 and FXR2. Interacts with FMR1 isoform 6; the interaction occurs in a RNA-dependent manner. Interacts with RAC1 (activated form) which causes the complex to dissociate, releasing activated WASF1. The complex can also be activated by NCK1. Interacts with SHANK3; the interaction mediates the association of SHANK3 with the WAVE1 complex. Interacts with TMEM108 (via N-terminus); the interaction associates TMEM108 with the WAVE1 complex. Expressed in T-cells. Increased expression is observed in CD4(+) T-lymphocytes from patients with multiple sclerosis (at protein level).

Its subcellular location is the cytoplasm. The protein resides in the nucleus. The protein localises to the perinuclear region. It localises to the synapse. It is found in the synaptosome. In terms of biological role, involved in T-cell adhesion and p53/TP53-dependent induction of apoptosis. Does not bind RNA. As component of the WAVE1 complex, required for BDNF-NTRK2 endocytic trafficking and signaling from early endosomes. The sequence is that of Cytoplasmic FMR1-interacting protein 2 from Homo sapiens (Human).